We begin with the raw amino-acid sequence, 458 residues long: COBRA-like protein 2 (458 aa).

Positions 1–29 (MARFLLGAAAIALLAGVSSLLLMVPFAEA) are cleaved as a signal peptide. Residues Asn-38, Asn-163, Asn-171, Asn-211, Asn-236, Asn-318, Asn-333, and Asn-352 are each glycosylated (N-linked (GlcNAc...) asparagine). The helical transmembrane segment at 430 to 450 (VFLLMSFLVCGTLAFLHNHLV) threads the bilayer.

This sequence belongs to the COBRA family.

It is found in the membrane. The protein is COBRA-like protein 2 (BC1L2) of Oryza sativa subsp. japonica (Rice).